The chain runs to 94 residues: Aspartyl/glutamyl-tRNA(Asn/Gln) amidotransferase subunit C (94 aa).

This sequence belongs to the GatC family. In terms of assembly, heterotrimer of A, B and C subunits.

It carries out the reaction L-glutamyl-tRNA(Gln) + L-glutamine + ATP + H2O = L-glutaminyl-tRNA(Gln) + L-glutamate + ADP + phosphate + H(+). The enzyme catalyses L-aspartyl-tRNA(Asn) + L-glutamine + ATP + H2O = L-asparaginyl-tRNA(Asn) + L-glutamate + ADP + phosphate + 2 H(+). In terms of biological role, allows the formation of correctly charged Asn-tRNA(Asn) or Gln-tRNA(Gln) through the transamidation of misacylated Asp-tRNA(Asn) or Glu-tRNA(Gln) in organisms which lack either or both of asparaginyl-tRNA or glutaminyl-tRNA synthetases. The reaction takes place in the presence of glutamine and ATP through an activated phospho-Asp-tRNA(Asn) or phospho-Glu-tRNA(Gln). This is Aspartyl/glutamyl-tRNA(Asn/Gln) amidotransferase subunit C from Desulfitobacterium hafniense (strain DSM 10664 / DCB-2).